The sequence spans 96 residues: HIG1 domain family member 1C (96 aa).

Residues 1–26 lie on the Cytoplasmic side of the membrane; that stretch reads MSSDEWSAAEDEGQLSRLLRKSRDSP. The 91-residue stretch at 1 to 91 folds into the HIG1 domain; sequence MSSDEWSAAE…YKDYIRPRFF (91 aa). The helical transmembrane segment at 27–44 threads the bilayer; the sequence is FVPVGMAGFVAVLSYGLY. The Extracellular portion of the chain corresponds to 45–58; that stretch reads KLNSRREQKMSLHL. The chain crosses the membrane as a helical span at residues 59-81; that stretch reads IHVRVAAQGCVVGAVTLGVLYSM. The Cytoplasmic segment spans residues 82–96; sequence YKDYIRPRFFNVPKK.

It localises to the membrane. The protein is HIG1 domain family member 1C (Higd1c) of Mus musculus (Mouse).